The primary structure comprises 224 residues: Urease accessory protein UreF (224 aa).

The protein belongs to the UreF family. In terms of assembly, ureD, UreF and UreG form a complex that acts as a GTP-hydrolysis-dependent molecular chaperone, activating the urease apoprotein by helping to assemble the nickel containing metallocenter of UreC. The UreE protein probably delivers the nickel.

The protein resides in the cytoplasm. Required for maturation of urease via the functional incorporation of the urease nickel metallocenter. In Citrobacter koseri (strain ATCC BAA-895 / CDC 4225-83 / SGSC4696), this protein is Urease accessory protein UreF.